A 431-amino-acid chain; its full sequence is Glutamyl-tRNA(Gln) amidotransferase subunit A (431 aa).

Residues K37 and S112 each act as charge relay system in the active site. The active-site Acyl-ester intermediate is the S136.

The protein belongs to the amidase family. GatA subfamily. As to quaternary structure, heterotrimer of A, B and C subunits.

The enzyme catalyses L-glutamyl-tRNA(Gln) + L-glutamine + ATP + H2O = L-glutaminyl-tRNA(Gln) + L-glutamate + ADP + phosphate + H(+). In terms of biological role, allows the formation of correctly charged Gln-tRNA(Gln) through the transamidation of misacylated Glu-tRNA(Gln) in organisms which lack glutaminyl-tRNA synthetase. The reaction takes place in the presence of glutamine and ATP through an activated gamma-phospho-Glu-tRNA(Gln). The sequence is that of Glutamyl-tRNA(Gln) amidotransferase subunit A from Methanospirillum hungatei JF-1 (strain ATCC 27890 / DSM 864 / NBRC 100397 / JF-1).